A 501-amino-acid chain; its full sequence is Beta-secretase 1 (501 aa).

An N-terminal signal peptide occupies residues 1–21; it reads MAQALPWLLLWMGAGVLPAHG. Residues 22–45 constitute a propeptide that is removed on maturation; it reads TQHGIRLPLRSGLGGAPLGLRLPR. The Extracellular portion of the chain corresponds to 22–457; sequence TQHGIRLPLR…PQTDESTLMT (436 aa). The disordered stretch occupies residues 39–58; sequence LGLRLPRETDEEPEEPGRRG. Residues 75–416 form the Peptidase A1 domain; sequence YYVEMTVGSP…DRARKRIGFA (342 aa). D93 is a catalytic residue. An N6-acetyllysine modification is found at K126. Residues N153, N172, and N223 are each glycosylated (N-linked (GlcNAc...) asparagine). Intrachain disulfides connect C216/C420, C278/C443, and C330/C380. N6-acetyllysine is present on residues K275, K279, and K285. D289 is a catalytic residue. Residues K299, K300, and K307 each carry the N6-acetyllysine modification. A glycan (N-linked (GlcNAc...) asparagine) is linked at N354. The chain crosses the membrane as a helical span at residues 458–478; sequence IAYVMAAICALFMLPLCLMVC. Residues C474, C478, C482, and C485 are each lipidated (S-palmitoyl cysteine). Over 479-501 the chain is Cytoplasmic; it reads QWRCLRCLRQQHDDFADDISLLK. Positions 479 to 501 are interaction with RTN3; it reads QWRCLRCLRQQHDDFADDISLLK. The short motif at 496 to 500 is the DXXLL element; the sequence is DISLL. S498 is subject to Phosphoserine. K501 participates in a covalent cross-link: Glycyl lysine isopeptide (Lys-Gly) (interchain with G-Cter in ubiquitin).

The protein belongs to the peptidase A1 family. In terms of assembly, monomer. Interacts (via DXXLL motif) with GGA1, GGA2 and GGA3 (via their VHS domain); the interaction highly increases when BACE1 is phosphorylated at Ser-498. Interacts with RTN1; RTN2; RTN3 and RTN4; the interaction leads to inhibition of amyloid precursor protein processing. Interacts with SNX6. Interacts with PCSK9. Interacts with NAT8 and NAT8B. Interacts with BIN1. Interacts (via extracellular domain) with ADAM10 (via extracellular domain). Interacts with SORL1; this interaction may affect binding with APP and hence reduce APP cleavage. Interacts with NRDC AND NRG1. Post-translationally, N-Glycosylated. Addition of a bisecting N-acetylglucosamine by MGAT3 blocks lysosomal targeting, further degradation and is required for maintaining stability under stress conditions. Acetylated in the endoplasmic reticulum at Lys-126, Lys-275, Lys-279, Lys-285, Lys-299, Lys-300 and Lys-307. Acetylation by NAT8 and NAT8B is transient and deacetylation probably occurs in the Golgi. Acetylation regulates the maturation, the transport to the plasma membrane, the stability and the expression of the protein. In terms of processing, palmitoylation mediates lipid raft localization. Post-translationally, ubiquitinated at Lys-501, ubiquitination leads to lysosomal degradation. Monoubiquitinated and 'Lys-63'-linked polyubitinated. Deubiquitnated by USP8; inhibits lysosomal degradation. Phosphorylation at Ser-498 is required for interaction with GGA1 and retrograded transport from endosomal compartments to the trans-Golgi network. Non-phosphorylated BACE1 enters a direct recycling route to the cell surface. In terms of tissue distribution, expressed at high levels in the brain and pancreas. In the brain, expression is highest in the substantia nigra, locus coruleus and medulla oblongata.

The protein resides in the cell membrane. Its subcellular location is the golgi apparatus. It is found in the trans-Golgi network. It localises to the endoplasmic reticulum. The protein localises to the endosome. The protein resides in the cell surface. Its subcellular location is the cytoplasmic vesicle membrane. It is found in the membrane raft. It localises to the lysosome. The protein localises to the late endosome. The protein resides in the early endosome. Its subcellular location is the recycling endosome. It is found in the cell projection. It localises to the axon. The protein localises to the dendrite. The enzyme catalyses Broad endopeptidase specificity. Cleaves Glu-Val-Asn-Leu-|-Asp-Ala-Glu-Phe in the Swedish variant of Alzheimer's amyloid precursor protein.. With respect to regulation, inhibited by RTN3 and RTN4. Its function is as follows. Responsible for the proteolytic processing of the amyloid precursor protein (APP). Cleaves at the N-terminus of the A-beta peptide sequence, between residues 671 and 672 of APP, leads to the generation and extracellular release of beta-cleaved soluble APP, and a corresponding cell-associated C-terminal fragment which is later released by gamma-secretase. Cleaves CHL1. The chain is Beta-secretase 1 from Homo sapiens (Human).